Here is a 248-residue protein sequence, read N- to C-terminus: Large ribosomal subunit protein uL4 (248 aa).

Disordered regions lie at residues 48-96 (GTHK…PVPR) and 210-248 (AFSE…RTGA). Positions 233 to 248 (DATKARSSRHDDRTGA) are enriched in basic and acidic residues.

The protein belongs to the universal ribosomal protein uL4 family. As to quaternary structure, part of the 50S ribosomal subunit.

Its function is as follows. One of the primary rRNA binding proteins, this protein initially binds near the 5'-end of the 23S rRNA. It is important during the early stages of 50S assembly. It makes multiple contacts with different domains of the 23S rRNA in the assembled 50S subunit and ribosome. Functionally, forms part of the polypeptide exit tunnel. The polypeptide is Large ribosomal subunit protein uL4 (Tropheryma whipplei (strain Twist) (Whipple's bacillus)).